The chain runs to 371 residues: Protein SOMBRERO (371 aa).

Positions 17–166 (VPPGFRFHPT…GWVVCRVFKK (150 aa)) constitute an NAC domain. A DNA-binding region spans residues 118–172 (IGLRKTLVFYTGRAPHGQKTEWIMHEYRLDDSENEIQEDGWVVCRVFKKKNHFRG). Disordered regions lie at residues 176 to 213 (EQEQDHHHHHQYISTNNDHDHHHHIDSNSNNHSPLILH) and 316 to 355 (VQNHQAKCFGDLSNNDNNDQADHLGNNNGGSSSSPVNQRF). Positions 192–201 (NDHDHHHHID) are enriched in basic and acidic residues. Low complexity-rich tracts occupy residues 202 to 213 (SNSNNHSPLILH) and 340 to 349 (GNNNGGSSSS).

Accumulates in maturing root cap cells, in both COL and LRC cells.

Its subcellular location is the nucleus. In terms of biological role, transcription regulator. Together with BRN1 and BRN2, regulates cellular maturation of root cap. Represses stem cell-like divisions in the root cap daughter cells, and thus promotes daughter cell fate. Inhibits expression of its positive regulator FEZ in a feedback loop for controlled switches in cell division plane. Promotes the expression of genes involved in secondary cell walls (SCW) biosynthesis. The protein is Protein SOMBRERO (SMB) of Arabidopsis thaliana (Mouse-ear cress).